The chain runs to 238 residues: ATP-dependent dethiobiotin synthetase BioD (238 aa).

12 to 17 contributes to the ATP binding site; the sequence is EVGKTV. Thr-16 contacts Mg(2+). Residue Lys-37 is part of the active site. Residue Thr-41 coordinates substrate. ATP is bound by residues Asp-50, 109 to 112, 170 to 171, and 200 to 202; these read EGAG, GS, and PAG. Asp-50 and Glu-109 together coordinate Mg(2+).

The protein belongs to the dethiobiotin synthetase family. In terms of assembly, homodimer. Requires Mg(2+) as cofactor.

Its subcellular location is the cytoplasm. It carries out the reaction (7R,8S)-7,8-diammoniononanoate + CO2 + ATP = (4R,5S)-dethiobiotin + ADP + phosphate + 3 H(+). It functions in the pathway cofactor biosynthesis; biotin biosynthesis; biotin from 7,8-diaminononanoate: step 1/2. Catalyzes a mechanistically unusual reaction, the ATP-dependent insertion of CO2 between the N7 and N8 nitrogen atoms of 7,8-diaminopelargonic acid (DAPA, also called 7,8-diammoniononanoate) to form a ureido ring. In Streptomyces coelicolor (strain ATCC BAA-471 / A3(2) / M145), this protein is ATP-dependent dethiobiotin synthetase BioD.